Consider the following 416-residue polypeptide: 4-hydroxy-3-methylbut-2-en-1-yl diphosphate synthase (flavodoxin) (416 aa).

[4Fe-4S] cluster is bound by residues Cys304, Cys307, Cys350, and Glu357.

Belongs to the IspG family. [4Fe-4S] cluster serves as cofactor.

It catalyses the reaction (2E)-4-hydroxy-3-methylbut-2-enyl diphosphate + oxidized [flavodoxin] + H2O + 2 H(+) = 2-C-methyl-D-erythritol 2,4-cyclic diphosphate + reduced [flavodoxin]. Its pathway is isoprenoid biosynthesis; isopentenyl diphosphate biosynthesis via DXP pathway; isopentenyl diphosphate from 1-deoxy-D-xylulose 5-phosphate: step 5/6. Converts 2C-methyl-D-erythritol 2,4-cyclodiphosphate (ME-2,4cPP) into 1-hydroxy-2-methyl-2-(E)-butenyl 4-diphosphate. This is 4-hydroxy-3-methylbut-2-en-1-yl diphosphate synthase (flavodoxin) from Allorhizobium ampelinum (strain ATCC BAA-846 / DSM 112012 / S4) (Agrobacterium vitis (strain S4)).